Reading from the N-terminus, the 297-residue chain is Vacuolar protein sorting-associated protein 26C (297 aa).

The protein belongs to the VPS26 family. As to quaternary structure, component of the commander complex that is essential for endosomal recycling of transmembrane cargos; the commander complex is composed of the CCC subcomplex and the retriever subcomplex. Component of the heterotrimeric retriever complex consisting of VPS26C, VPS29 and VPS35L; within the complex interacts with VPS35L. Interacts with SNX17 (via C-terminus); the interaction is direct and associates SNX17 with the retriever complex. Interacts with SNX31; the interaction is direct.

It localises to the endosome. Component of the commander complex that is essential for endosomal recycling of transmembrane cargos; the commander complex is composed of the CCC subcomplex and the retriever subcomplex. Component of the retriever complex, which is a heterotrimeric complex related to retromer cargo-selective complex (CSC) and essential for retromer-independent retrieval and recycling of numerous cargos such as integrin alpha-5/beta-1 (ITGA5:ITGB1). The recruitment of the retriever complex to the endosomal membrane involves CCC and WASH complexes. In the endosomes, drives the retriever and recycling of NxxY-motif-containing cargo proteins by coupling to SNX17, a cargo essential for the homeostatic maintenance of numerous cell surface proteins associated with processes that include cell migration, cell adhesion, nutrient supply and cell signaling. This is Vacuolar protein sorting-associated protein 26C from Mus musculus (Mouse).